The primary structure comprises 207 residues: Guanylate kinase (207 aa).

The region spanning 4 to 184 (GTLYIVSAPS…ALMDFKAIIR (181 aa)) is the Guanylate kinase-like domain. 11–18 (APSGAGKS) provides a ligand contact to ATP.

This sequence belongs to the guanylate kinase family.

Its subcellular location is the cytoplasm. It carries out the reaction GMP + ATP = GDP + ADP. The catalysed reaction is dZMP + ATP = dZDP + ADP. Its pathway is purine metabolism. In terms of biological role, essential for recycling GMP and indirectly, cGMP. Functionally, (Microbial infection) Catalyzes the phosphorylation of dZMP to dZDP, when the bacterium is infected by a phage that produces the substrate for the synthesis of dZTP (2- amino-2'-deoxyadenosine 5'-triphosphate), which is then used by the phage as a DNA polymerase substrate. In Vibrio cholerae serotype O1 (strain ATCC 39315 / El Tor Inaba N16961), this protein is Guanylate kinase (gmk).